Here is a 342-residue protein sequence, read N- to C-terminus: MSINIEQAIIHEISQDSQGQLRCRLRPQPLLNSQAVEMMLEELHQTYTSKSGKGFGYFGIHGDDGEANPAFSNALQEYRAGDLGFVEFTGQASKLLQEELAKYDFSQGGFLLMSCYTSMASDFLFVALLSAKSSMTVLDDMELSQNNHLDLSNIQLAARIDLTEWQADKDSRKYISFIRGRAGRKVADFFLDFMGCVEGVNTKAQNKTLMNAVEDFVASSELTKEERQQCRNKVFEYCSERFDEGADIEIKDLADELADQGMESFYDFARGGSYELDEEFPADKSTLRQLKKFSGTGGGVTISFDGGHLGQRVIYDPISDTLLIKGVPANLKDQLDRRLKGE.

This sequence belongs to the YejK family.

The protein resides in the cytoplasm. It localises to the nucleoid. The sequence is that of Nucleoid-associated protein Shewana3_2426 from Shewanella sp. (strain ANA-3).